We begin with the raw amino-acid sequence, 639 residues long: Tetracycline resistance protein TetW (639 aa).

The 243-residue stretch at 1–243 (MKIINIGILA…VTGLFQPIGE (243 aa)) folds into the tr-type G domain. GTP-binding positions include 10-17 (AHVDAGKT), 74-78 (DTPGH), and 128-131 (NKID).

Belongs to the TRAFAC class translation factor GTPase superfamily. Classic translation factor GTPase family. TetM/TetO subfamily.

In terms of biological role, abolishes the inhibitory effect of tetracyclin on protein synthesis by a non-covalent modification of the ribosomes. This is Tetracycline resistance protein TetW (tetW) from Butyrivibrio fibrisolvens.